Consider the following 209-residue polypeptide: Potassium-transporting ATPase KdpC subunit (209 aa).

The helical transmembrane segment at M11–A31 threads the bilayer. The tract at residues A188–R209 is disordered. Residues E197–R209 show a composition bias toward basic and acidic residues.

This sequence belongs to the KdpC family. In terms of assembly, the system is composed of three essential subunits: KdpA, KdpB and KdpC.

Its subcellular location is the cell inner membrane. Its function is as follows. Part of the high-affinity ATP-driven potassium transport (or Kdp) system, which catalyzes the hydrolysis of ATP coupled with the electrogenic transport of potassium into the cytoplasm. This subunit acts as a catalytic chaperone that increases the ATP-binding affinity of the ATP-hydrolyzing subunit KdpB by the formation of a transient KdpB/KdpC/ATP ternary complex. The chain is Potassium-transporting ATPase KdpC subunit from Rhodospirillum centenum (strain ATCC 51521 / SW).